A 786-amino-acid polypeptide reads, in one-letter code: Endonuclease MutS2 (786 aa).

335–342 (GPNTGGKT) is a binding site for ATP. The Smr domain maps to 711–786 (LDLRGERFEN…GLGVTVVELK (76 aa)).

The protein belongs to the DNA mismatch repair MutS family. MutS2 subfamily. As to quaternary structure, homodimer. Binds to stalled ribosomes, contacting rRNA.

In terms of biological role, endonuclease that is involved in the suppression of homologous recombination and thus may have a key role in the control of bacterial genetic diversity. Its function is as follows. Acts as a ribosome collision sensor, splitting the ribosome into its 2 subunits. Detects stalled/collided 70S ribosomes which it binds and splits by an ATP-hydrolysis driven conformational change. Acts upstream of the ribosome quality control system (RQC), a ribosome-associated complex that mediates the extraction of incompletely synthesized nascent chains from stalled ribosomes and their subsequent degradation. Probably generates substrates for RQC. The chain is Endonuclease MutS2 from Bacillus cereus (strain Q1).